Reading from the N-terminus, the 148-residue chain is Small ribosomal subunit protein eS6 (148 aa).

It belongs to the eukaryotic ribosomal protein eS6 family.

This Pyrobaculum islandicum (strain DSM 4184 / JCM 9189 / GEO3) protein is Small ribosomal subunit protein eS6.